Here is a 143-residue protein sequence, read N- to C-terminus: Ribonuclease P protein component (143 aa).

Residues 111–143 (RVKRKGGGPGGNRRSAPPGSAPLTDDGRLRGEP) form a disordered region.

This sequence belongs to the RnpA family. As to quaternary structure, consists of a catalytic RNA component (M1 or rnpB) and a protein subunit.

The catalysed reaction is Endonucleolytic cleavage of RNA, removing 5'-extranucleotides from tRNA precursor.. Its function is as follows. RNaseP catalyzes the removal of the 5'-leader sequence from pre-tRNA to produce the mature 5'-terminus. It can also cleave other RNA substrates such as 4.5S RNA. The protein component plays an auxiliary but essential role in vivo by binding to the 5'-leader sequence and broadening the substrate specificity of the ribozyme. The sequence is that of Ribonuclease P protein component from Deinococcus geothermalis (strain DSM 11300 / CIP 105573 / AG-3a).